The chain runs to 326 residues: Protein SEH1 (326 aa).

5 WD repeats span residues 7–46 (TLDS…SSTF), 54–95 (VSES…AHGL), 105–146 (NKSS…ELKN), 224–266 (DKGD…DLEG), and 278–317 (GHQG…EWHE).

This sequence belongs to the WD repeat SEC13 family. Part of the nuclear pore complex (NPC). The NPC has an eight-fold symmetrical structure comprising a central transport channel and two rings, the cytoplasmic and nuclear rings, to which eight filaments are attached. The cytoplasmic filaments have loose ends, while the nuclear filaments are joined in a distal ring, forming a nuclear basket. NPCs are highly dynamic in configuration and composition, and can be devided in 3 subcomplexes, the NUP62 subcomplex, the NUP107-160 subcomplex and the NUP93 subcomplex, containing approximately 30 different nucleoporin proteins.

It is found in the nucleus envelope. Its subcellular location is the nucleus. It localises to the cytoplasm. The protein localises to the nuclear pore complex. Its function is as follows. Required for proper export of mRNAs from the nucleus to the cytoplasm. The chain is Protein SEH1 from Arabidopsis thaliana (Mouse-ear cress).